The sequence spans 318 residues: Ubiquitin-like domain-containing CTD phosphatase 1 (318 aa).

The 79-residue stretch at 3–81 (LPIIVKWGGQ…IMMMGTREES (79 aa)) folds into the Ubiquitin-like domain. At Lys117 the chain carries N6-acetyllysine. The 162-residue stretch at 133–294 (PREGKKLLVL…VKLTQYLKEI (162 aa)) folds into the FCP1 homology domain. Mg(2+) is bound by residues Asp143, Asp145, and Asp253.

It depends on Mg(2+) as a cofactor.

The protein resides in the nucleus. The catalysed reaction is O-phospho-L-seryl-[protein] + H2O = L-seryl-[protein] + phosphate. The enzyme catalyses O-phospho-L-threonyl-[protein] + H2O = L-threonyl-[protein] + phosphate. Its function is as follows. Dephosphorylates 26S nuclear proteasomes, thereby decreasing their proteolytic activity. Recruited to the 19S regulatory particle of the 26S proteasome through its interaction with 19S component PSMD2/RPN1. Once recruited, dephosphorylates 19S component PSMC2/RPT1 which impairs PSMC2 ATPase activity and disrupts 26S proteasome assembly. Has also been reported to stimulate the proteolytic activity of the 26S proteasome. This Rattus norvegicus (Rat) protein is Ubiquitin-like domain-containing CTD phosphatase 1 (Ublcp1).